The primary structure comprises 391 residues: Elongation factor Tu 1 (391 aa).

Positions 10-201 (KPHVNIGTIG…EVDNYIPTPE (192 aa)) constitute a tr-type G domain. Positions 19–26 (GHVDHGKT) are G1. 19–26 (GHVDHGKT) contacts GTP. Thr26 lines the Mg(2+) pocket. The tract at residues 55–59 (GITIS) is G2. Residues 76–79 (DCPG) form a G3 region. GTP-binding positions include 76 to 80 (DCPGH) and 131 to 134 (NKVD). The G4 stretch occupies residues 131–134 (NKVD). Residues 169–171 (SAL) form a G5 region.

The protein belongs to the TRAFAC class translation factor GTPase superfamily. Classic translation factor GTPase family. EF-Tu/EF-1A subfamily. In terms of assembly, monomer.

It localises to the cytoplasm. The enzyme catalyses GTP + H2O = GDP + phosphate + H(+). GTP hydrolase that promotes the GTP-dependent binding of aminoacyl-tRNA to the A-site of ribosomes during protein biosynthesis. The polypeptide is Elongation factor Tu 1 (Bartonella quintana (strain Toulouse) (Rochalimaea quintana)).